Here is a 1383-residue protein sequence, read N- to C-terminus: WD repeat-containing protein dyf-2 (1383 aa).

WD repeat units lie at residues 32 to 71, 72 to 112, 118 to 157, 160 to 198, and 337 to 376; these read EHGS…IDAL, NPTG…TDTV, SSKE…RIAV, KHQR…VSTT, and ETEK…LAAS. 7 TPR repeats span residues 756-789, 810-847, 885-918, 940-973, 996-1029, 1031-1053, and 1064-1097; these read EEKN…MEAL, PKEI…NPQN, RVVK…DRAA, PKIH…DNQV, IEGA…QEAF, LAEK…NISQ, and VNDM…ENCV.

Component of the IFT complex A (IFT-A) composed of at least che-11, daf-10, dyf-2, ift-139, ift-43 and ifta-1. Expressed in ciliated sensory neurons.

It is found in the cell projection. The protein localises to the cilium. Its function is as follows. Component of the IFT complex A (IFT-A), a complex required for retrograde ciliary transport. Moves along the ciliary axoneme and is involved in the assembly, localization and the movement of other intraflagellar transport (IFT) proteins along the cilia axoneme. May also associate with the BBSome complex in order to mediate ciliary transport. Regulates cilia biogenesis, morphology and sensitivity to environmental cues. This chain is WD repeat-containing protein dyf-2, found in Caenorhabditis elegans.